A 416-amino-acid polypeptide reads, in one-letter code: Lipid II:glycine glycyltransferase (416 aa).

This sequence belongs to the FemABX family.

The protein resides in the cytoplasm. The enzyme catalyses beta-D-GlcNAc-(1-&gt;4)-Mur2Ac(oyl-L-Ala-D-isoglutaminyl-L-Lys-D-Ala-D-Ala)-di-trans,octa-cis-undecaprenyl diphosphate + glycyl-tRNA(Gly) = beta-D-GlcNAc-(1-&gt;4)-Mur2Ac(oyl-L-Ala-D-isoglutaminyl-L-Lys-(N(6)-Gly)-D-Ala-D-Ala)-di-trans,octa-cis-undecaprenyl diphosphate + tRNA(Gly) + H(+). Its function is as follows. Catalyzes the incorporation of amino acid(s) into the interchain peptide bridge of peptidoglycan, using aminoacyl-tRNA as amino acid donor. The protein is Lipid II:glycine glycyltransferase (femX) of Staphylococcus epidermidis (strain ATCC 35984 / DSM 28319 / BCRC 17069 / CCUG 31568 / BM 3577 / RP62A).